The sequence spans 453 residues: Glutamyl-tRNA(Gln) amidotransferase subunit A (453 aa).

Active-site charge relay system residues include K56 and S131. S155 (acyl-ester intermediate) is an active-site residue.

It belongs to the amidase family. GatA subfamily. As to quaternary structure, heterotrimer of A, B and C subunits.

It catalyses the reaction L-glutamyl-tRNA(Gln) + L-glutamine + ATP + H2O = L-glutaminyl-tRNA(Gln) + L-glutamate + ADP + phosphate + H(+). Its function is as follows. Allows the formation of correctly charged Gln-tRNA(Gln) through the transamidation of misacylated Glu-tRNA(Gln) in organisms which lack glutaminyl-tRNA synthetase. The reaction takes place in the presence of glutamine and ATP through an activated gamma-phospho-Glu-tRNA(Gln). The chain is Glutamyl-tRNA(Gln) amidotransferase subunit A from Campylobacter fetus subsp. fetus (strain 82-40).